The following is a 754-amino-acid chain: 1,4-alpha-glucan branching enzyme GlgB (754 aa).

D431 functions as the Nucleophile in the catalytic mechanism. E484 serves as the catalytic Proton donor.

It belongs to the glycosyl hydrolase 13 family. GlgB subfamily. In terms of assembly, monomer.

It catalyses the reaction Transfers a segment of a (1-&gt;4)-alpha-D-glucan chain to a primary hydroxy group in a similar glucan chain.. It participates in glycan biosynthesis; glycogen biosynthesis. Functionally, catalyzes the formation of the alpha-1,6-glucosidic linkages in glycogen by scission of a 1,4-alpha-linked oligosaccharide from growing alpha-1,4-glucan chains and the subsequent attachment of the oligosaccharide to the alpha-1,6 position. This chain is 1,4-alpha-glucan branching enzyme GlgB, found in Prochlorococcus marinus subsp. pastoris (strain CCMP1986 / NIES-2087 / MED4).